Here is a 327-residue protein sequence, read N- to C-terminus: Annexin A8 (327 aa).

Annexin repeat units follow at residues 21 to 92 (FNPV…ALMY), 93 to 164 (PPYR…CLLQ), 177 to 249 (GLAL…TIVK), and 253 to 324 (NLHC…SLVG). Residues M266, G268, G270, and D310 each contribute to the Ca(2+) site.

The protein belongs to the annexin family.

Functionally, this protein is an anticoagulant protein that acts as an indirect inhibitor of the thromboplastin-specific complex, which is involved in the blood coagulation cascade. The polypeptide is Annexin A8 (ANXA8) (Oryctolagus cuniculus (Rabbit)).